Here is a 405-residue protein sequence, read N- to C-terminus: Argininosuccinate synthase (405 aa).

ATP is bound by residues Ala-10–Ser-18 and Ala-37. L-citrulline contacts are provided by Tyr-88 and Ser-93. Gly-118 serves as a coordination point for ATP. 3 residues coordinate L-aspartate: Thr-120, Asn-124, and Asp-125. An L-citrulline-binding site is contributed by Asn-124. Residues Arg-128, Ser-179, Ser-188, Glu-264, and Tyr-276 each contribute to the L-citrulline site.

Belongs to the argininosuccinate synthase family. Type 1 subfamily. As to quaternary structure, homotetramer.

The protein resides in the cytoplasm. It carries out the reaction L-citrulline + L-aspartate + ATP = 2-(N(omega)-L-arginino)succinate + AMP + diphosphate + H(+). The protein operates within amino-acid biosynthesis; L-arginine biosynthesis; L-arginine from L-ornithine and carbamoyl phosphate: step 2/3. The protein is Argininosuccinate synthase of Pseudomonas syringae pv. syringae (strain B728a).